An 803-amino-acid polypeptide reads, in one-letter code: 3',5'-cyclic-AMP phosphodiesterase 4D (803 aa).

The interval 1-103 is disordered; sequence MEAEGSSVPA…SGASRVRHRG (103 aa). H52 and H56 each carry phosphoserine. Residues 58 to 85 show a composition bias toward pro residues; the sequence is PPPPPPSPQPQLQPPPPPPLPPPPPPPG. A phosphoserine mark is found at S137, S294, S296, S343, and S370. The tract at residues 338–358 is disordered; sequence EVEIPSPTQKEKEKKKRPMSQ. One can recognise a PDEase domain in the interval 381 to 710; the sequence is VKTEQEDVLA…EWYQSTIPQS (330 aa). Residue K382 forms a Glycyl lysine isopeptide (Lys-Gly) (interchain with G-Cter in SUMO) linkage. The active-site Proton donor is the H457. 3',5'-cyclic AMP is bound at residue H457. H457 contacts AMP. Positions 461, 497, 498, and 615 each coordinate Zn(2+). AMP is bound by residues D498, D615, N618, Q666, and F669. D498 provides a ligand contact to Mg(2+). D498 is a Mn(2+) binding site. 3',5'-cyclic AMP-binding residues include Q666 and F669. 2 disordered regions span residues 705–724 and 732–803; these read STIP…GRQG and ELTL…CPDT. Over residues 757 to 768 the composition is skewed to polar residues; sequence CSDSKTLCTQDS. Positions 774–789 are enriched in acidic residues; the sequence is PLDEQVEEEAVAEEES.

It belongs to the cyclic nucleotide phosphodiesterase family. PDE4 subfamily. Homodimer for the long isoforms. Isoforms with truncated N-termini are monomeric. Binds ARRB2. Isoform 33 is part of a ternary complex containing PRKAR2A, PRKAR2B and AKAP9. Identified in a complex composed of RYR1, PDE4D, PKA, FKBP1A and protein phosphatase 1 (PP1). Interacts with PDE4DIP. Isoform 5 interacts (via N-terminal region) with SHANK2 (via proline-rich region); the interaction is increased in a PKA-dependent manner. Isoform 33, isoform 4, isoform 7, isoform 8 and isoform 9 but not isoform 32 and isoform 6 interact with SHANK2. Isoform 31 interacts weakly with SHANK2. The cofactor is Zn(2+). Mg(2+) serves as cofactor. It depends on Mn(2+) as a cofactor. Isoform 1 and isoform 9 are rapidly activated by PKA through phosphorylation. Long isoforms that share a conserved PKA phosphorylation site in the N-terminus are also activated. In terms of processing, sumoylation of long isoforms by PIAS4 augments their activation by PKA phosphorylation and represses their inhibition by ERK phosphorylation. As to expression, expressed in epithelial cells. Isoform 33, isoform 4, isoform 5 and isoform 9 are expressed in brain. Isoform 33, isoform 5, isoform 8 and isoform 9 are expressed in heart (at protein level). Isoform 4 and isoform 6 are strongly expressed in cortex and cerebellum. Isoform 7 is strongly expressed in cortex and testis; weakly expressed in kidney, lung, spleen and cerebellum. Isoform 8 is strongly expressed in lung, heart and liver. Isoform 31, isoform 32, isoform 33, isoform 5 and isoform 9 are widely distributed.

It is found in the apical cell membrane. It localises to the cytoplasm. Its subcellular location is the membrane. The protein localises to the cytoskeleton. The protein resides in the microtubule organizing center. It is found in the centrosome. It carries out the reaction 3',5'-cyclic AMP + H2O = AMP + H(+). The protein operates within purine metabolism; 3',5'-cyclic AMP degradation; AMP from 3',5'-cyclic AMP: step 1/1. With respect to regulation, activated by phosphatidic acid. Inhibited by rolipram. Hydrolyzes the second messenger cAMP, which is a key regulator of many important physiological processes. In Rattus norvegicus (Rat), this protein is 3',5'-cyclic-AMP phosphodiesterase 4D (Pde4d).